The sequence spans 202 residues: Endothelin-1 (202 aa).

The signal sequence occupies residues 1 to 25 (MDYFPVIFSLLFVAFQGAPETAVLG). The propeptide occupies 26-50 (AELSPRAEKEVQSPPPSTSWRPRRS). Residues 28–47 (LSPRAEKEVQSPPPSTSWRP) are disordered. 2 disulfides stabilise this stretch: cysteine 53–cysteine 67 and cysteine 55–cysteine 63. A propeptide spanning residues 74-202 (VNTPERVVPY…DQKLIHNRAH (129 aa)) is cleaved from the precursor. The tract at residues 110 to 124 (CQCAHQKDKKCWNFC) is endothelin-like.

The protein belongs to the endothelin/sarafotoxin family.

The protein resides in the secreted. Endothelins are endothelium-derived vasoconstrictor peptides. Probable ligand for G-protein coupled receptors EDNRA and EDNRB which activates PTK2B, BCAR1, BCAR3 and, GTPases RAP1 and RHOA cascade in glomerular mesangial cells. Also binds the DEAR/FBXW7-AS1 receptor. Promotes mesenteric arterial wall remodeling via activation of ROCK signaling and subsequent colocalization of NFATC3 with F-actin filaments. NFATC3 then translocates to the nucleus where it subsequently promotes the transcription of the smooth muscle hypertrophy and differentiation marker ACTA2. The protein is Endothelin-1 (Edn1) of Rattus norvegicus (Rat).